The chain runs to 436 residues: Phosphomethylpyrimidine synthase (436 aa).

Substrate-binding positions include Asn69, Met98, Tyr127, His163, 185–187, 226–229, and Glu265; these read SRG and DACR. A Zn(2+)-binding site is contributed by His269. Tyr292 lines the substrate pocket. Residue His333 coordinates Zn(2+). 3 residues coordinate [4Fe-4S] cluster: Cys409, Cys412, and Cys416.

It belongs to the ThiC family. [4Fe-4S] cluster is required as a cofactor.

It carries out the reaction 5-amino-1-(5-phospho-beta-D-ribosyl)imidazole + S-adenosyl-L-methionine = 4-amino-2-methyl-5-(phosphooxymethyl)pyrimidine + CO + 5'-deoxyadenosine + formate + L-methionine + 3 H(+). The protein operates within cofactor biosynthesis; thiamine diphosphate biosynthesis. Catalyzes the synthesis of the hydroxymethylpyrimidine phosphate (HMP-P) moiety of thiamine from aminoimidazole ribotide (AIR) in a radical S-adenosyl-L-methionine (SAM)-dependent reaction. The protein is Phosphomethylpyrimidine synthase of Clostridium perfringens (strain ATCC 13124 / DSM 756 / JCM 1290 / NCIMB 6125 / NCTC 8237 / Type A).